We begin with the raw amino-acid sequence, 360 residues long: Probable neutral protease 2 homolog A (360 aa).

The N-terminal stretch at 1 to 17 (MQFTALLAALGAPLALA) is a signal peptide. The propeptide occupies 18–183 (ASIPAAAHNH…DDSTGVIDKR (166 aa)). 3 cysteine pairs are disulfide-bonded: Cys191-Cys262, Cys269-Cys287, and Cys300-Cys360. N-linked (GlcNAc...) asparagine glycosylation is present at Asn205. His311 serves as a coordination point for Zn(2+). Glu312 is an active-site residue. Zn(2+)-binding residues include His315 and Asp326.

Belongs to the peptidase M35 family. Zn(2+) is required as a cofactor.

Its subcellular location is the secreted. It carries out the reaction Preferential cleavage of bonds with hydrophobic residues in P1'. Also 3-Asn-|-Gln-4 and 8-Gly-|-Ser-9 bonds in insulin B chain.. Probable secreted metalloprotease that shows high activities on basic nuclear substrates such as histone and protamine. May be involved in virulence. This Trichophyton rubrum (Athlete's foot fungus) protein is Probable neutral protease 2 homolog A (NpII-A).